Consider the following 850-residue polypeptide: DNA mismatch repair protein MutS (850 aa).

ATP is bound at residue 608-615; it reads GPNMGGKS.

This sequence belongs to the DNA mismatch repair MutS family.

Its function is as follows. This protein is involved in the repair of mismatches in DNA. It is possible that it carries out the mismatch recognition step. This protein has a weak ATPase activity. The protein is DNA mismatch repair protein MutS of Thiobacillus denitrificans (strain ATCC 25259 / T1).